The primary structure comprises 304 residues: Glycine--tRNA ligase alpha subunit (304 aa).

It belongs to the class-II aminoacyl-tRNA synthetase family. In terms of assembly, tetramer of two alpha and two beta subunits.

It localises to the cytoplasm. The enzyme catalyses tRNA(Gly) + glycine + ATP = glycyl-tRNA(Gly) + AMP + diphosphate. This is Glycine--tRNA ligase alpha subunit from Streptococcus agalactiae serotype III (strain NEM316).